The chain runs to 321 residues: Glucokinase (321 aa).

8–13 contributes to the ATP binding site; the sequence is ADIGGT.

Belongs to the bacterial glucokinase family.

It localises to the cytoplasm. The catalysed reaction is D-glucose + ATP = D-glucose 6-phosphate + ADP + H(+). In Photorhabdus laumondii subsp. laumondii (strain DSM 15139 / CIP 105565 / TT01) (Photorhabdus luminescens subsp. laumondii), this protein is Glucokinase.